A 120-amino-acid polypeptide reads, in one-letter code: Large ribosomal subunit protein eL8 (120 aa).

Belongs to the eukaryotic ribosomal protein eL8 family. In terms of assembly, part of the 50S ribosomal subunit. Probably part of the RNase P complex.

Its subcellular location is the cytoplasm. Multifunctional RNA-binding protein that recognizes the K-turn motif in ribosomal RNA, the RNA component of RNase P, box H/ACA, box C/D and box C'/D' sRNAs. This Methanosarcina mazei (strain ATCC BAA-159 / DSM 3647 / Goe1 / Go1 / JCM 11833 / OCM 88) (Methanosarcina frisia) protein is Large ribosomal subunit protein eL8.